The following is a 381-amino-acid chain: Odorant receptor 46a, isoform A (381 aa).

Over 1-37 (MSKGVEIFYKGQKAFLNILSLWPQIERRWRIIHQVNY) the chain is Cytoplasmic. A helical transmembrane segment spans residues 38-58 (VHVIVFWVLLFDLLLVLHVMA). Asn-59 carries an N-linked (GlcNAc...) asparagine glycan. The Extracellular segment spans residues 59 to 65 (NLSYMSE). Residues 66–86 (VVKAIFILATSAGHTTKLLSI) traverse the membrane as a helical segment. Topologically, residues 87–127 (KANNVQMEELFRRLDNEEFRPRGANEELIFAAACERSRKLR) are cytoplasmic. The helical transmembrane segment at 128 to 148 (DFYGALSFAALSMILIPQFAL) threads the bilayer. The Extracellular portion of the chain corresponds to 149–170 (DWSHLPLKTYNPLGENTGSPAY). A helical transmembrane segment spans residues 171–191 (WLLYCYQCLALSVSCITNIGF). Residues 192–255 (DSLCSSLFIF…KTVERLLCKP (64 aa)) lie on the Cytoplasmic side of the membrane. The helical transmembrane segment at 256–276 (ISVQIFCSVLVLTANFYAIAV) threads the bilayer. Over 277-287 (LSDERLELFKY) the chain is Extracellular. Residues 288–308 (VTYQACMLIQIFILCYYAGEV) traverse the membrane as a helical segment. Topologically, residues 309–355 (TQRSLDLPHELYKTSWVDWDYRSRRIALLFMQRLHSTLRIRTLNPSL) are cytoplasmic. The chain crosses the membrane as a helical span at residues 356–376 (GFDLMLFSSIVNCSYSYFALL). Residues 377–381 (KRVNS) are Extracellular-facing.

It belongs to the insect chemoreceptor superfamily. Heteromeric odorant receptor channel (TC 1.A.69) family. Or2a subfamily. In terms of assembly, interacts with Orco. Complexes exist early in the endomembrane system in olfactory sensory neurons (OSNs), coupling these complexes to the conserved ciliary trafficking pathway. As to expression, isoform A is expressed in a subset of 17 olfactory receptor neurons in the maxillary palp.

It is found in the cell membrane. Functionally, odorant receptor which mediates acceptance or avoidance behavior, depending on its substrates. The odorant receptor repertoire encodes a large collection of odor stimuli that vary widely in identity, intensity, and duration. May form a complex with Orco to form odorant-sensing units, providing sensitive and prolonged odorant signaling and calcium permeability. The chain is Odorant receptor 46a, isoform A (Or46a) from Drosophila melanogaster (Fruit fly).